A 407-amino-acid polypeptide reads, in one-letter code: Na(+)-translocating NADH-quinone reductase subunit F (407 aa).

The chain crosses the membrane as a helical span at residues 6–26 (IFLAIGMFTAIVLGLVAIILV). The region spanning 35–127 (GDVTIQINGE…DMQIRVPEEV (93 aa)) is the 2Fe-2S ferredoxin-type domain. [2Fe-2S] cluster-binding residues include C70, C76, C79, and C111. The FAD-binding FR-type domain maps to 130-269 (VKKWECTVES…YGPFGEFFAK (140 aa)).

Belongs to the NqrF family. Composed of six subunits; NqrA, NqrB, NqrC, NqrD, NqrE and NqrF. Requires [2Fe-2S] cluster as cofactor. It depends on FAD as a cofactor.

The protein resides in the cell inner membrane. It carries out the reaction a ubiquinone + n Na(+)(in) + NADH + H(+) = a ubiquinol + n Na(+)(out) + NAD(+). NQR complex catalyzes the reduction of ubiquinone-1 to ubiquinol by two successive reactions, coupled with the transport of Na(+) ions from the cytoplasm to the periplasm. The first step is catalyzed by NqrF, which accepts electrons from NADH and reduces ubiquinone-1 to ubisemiquinone by a one-electron transfer pathway. The protein is Na(+)-translocating NADH-quinone reductase subunit F of Pseudomonas aeruginosa (strain UCBPP-PA14).